Consider the following 260-residue polypeptide: Type II methyltransferase M.CviBI (260 aa).

4 residues coordinate S-adenosyl-L-methionine: tryptophan 7, lysine 11, aspartate 54, and aspartate 177.

This sequence belongs to the N(4)/N(6)-methyltransferase family.

It catalyses the reaction a 2'-deoxyadenosine in DNA + S-adenosyl-L-methionine = an N(6)-methyl-2'-deoxyadenosine in DNA + S-adenosyl-L-homocysteine + H(+). In terms of biological role, a alpha subtype methylase, recognizes the double-stranded sequence 5'-GANTC-3', methylates A-2 on both strands, and protects the DNA from cleavage by the CviBI endonuclease. The sequence is that of Type II methyltransferase M.CviBI from Paramecium bursaria Chlorella virus NC1A (PBCV-NC1A).